The primary structure comprises 259 residues: Small ribosomal subunit protein eS4 (259 aa).

The S4 RNA-binding domain occupies Leu-41–Asp-105. Thr-248 is subject to Phosphothreonine. At Ser-258 the chain carries Phosphoserine.

It belongs to the eukaryotic ribosomal protein eS4 family.

This Tetrahymena thermophila protein is Small ribosomal subunit protein eS4.